The primary structure comprises 272 residues: Glutamate racemase (272 aa).

Substrate is bound by residues 13-14 (DS) and 45-46 (YG). Cysteine 76 functions as the Proton donor/acceptor in the catalytic mechanism. Residue 77-78 (NT) participates in substrate binding. The active-site Proton donor/acceptor is the cysteine 187. A substrate-binding site is contributed by 188 to 189 (TH).

It belongs to the aspartate/glutamate racemases family.

It catalyses the reaction L-glutamate = D-glutamate. It functions in the pathway cell wall biogenesis; peptidoglycan biosynthesis. Its function is as follows. Provides the (R)-glutamate required for cell wall biosynthesis. This Roseiflexus sp. (strain RS-1) protein is Glutamate racemase.